The sequence spans 480 residues: ATP synthase subunit beta (480 aa).

Glycine 154 to threonine 161 lines the ATP pocket.

The protein belongs to the ATPase alpha/beta chains family. In terms of assembly, F-type ATPases have 2 components, CF(1) - the catalytic core - and CF(0) - the membrane proton channel. CF(1) has five subunits: alpha(3), beta(3), gamma(1), delta(1), epsilon(1). CF(0) has four main subunits: a(1), b(1), b'(1) and c(9-12).

The protein localises to the cell inner membrane. It carries out the reaction ATP + H2O + 4 H(+)(in) = ADP + phosphate + 5 H(+)(out). Its function is as follows. Produces ATP from ADP in the presence of a proton gradient across the membrane. The catalytic sites are hosted primarily by the beta subunits. The sequence is that of ATP synthase subunit beta from Bradyrhizobium sp. (strain ORS 278).